A 159-amino-acid chain; its full sequence is Putative polyketide cyclase (159 aa).

To polyketide cyclases.

In terms of biological role, involved in developmentally regulated synthesis of a compound biosynthetically related to polyketide antibiotics which is essential for spore color in Streptomyces coelicolor. The polypeptide is Putative polyketide cyclase (Streptomyces coelicolor (strain ATCC BAA-471 / A3(2) / M145)).